The sequence spans 821 residues: Glycogen phosphorylase (821 aa).

Lysine 667 bears the N6-(pyridoxal phosphate)lysine mark.

This sequence belongs to the glycogen phosphorylase family. It depends on pyridoxal 5'-phosphate as a cofactor.

It catalyses the reaction [(1-&gt;4)-alpha-D-glucosyl](n) + phosphate = [(1-&gt;4)-alpha-D-glucosyl](n-1) + alpha-D-glucose 1-phosphate. Its function is as follows. Phosphorylase is an important allosteric enzyme in carbohydrate metabolism. Enzymes from different sources differ in their regulatory mechanisms and in their natural substrates. However, all known phosphorylases share catalytic and structural properties. This chain is Glycogen phosphorylase (glgP), found in Haemophilus influenzae (strain ATCC 51907 / DSM 11121 / KW20 / Rd).